Reading from the N-terminus, the 383-residue chain is Putative glutamate--cysteine ligase 2-1 (383 aa).

Belongs to the glutamate--cysteine ligase type 2 family. YbdK subfamily.

It carries out the reaction L-cysteine + L-glutamate + ATP = gamma-L-glutamyl-L-cysteine + ADP + phosphate + H(+). ATP-dependent carboxylate-amine ligase which exhibits weak glutamate--cysteine ligase activity. This is Putative glutamate--cysteine ligase 2-1 from Nocardia farcinica (strain IFM 10152).